A 360-amino-acid polypeptide reads, in one-letter code: Phospho-N-acetylmuramoyl-pentapeptide-transferase (360 aa).

10 consecutive transmembrane segments (helical) span residues 27-47, 72-92, 94-114, 132-152, 168-188, 199-219, 236-256, 263-283, 288-308, and 338-358; these read IVSLLTALFISLWMGPHLIAW, PTMGGLMILFSITISVLMWAY, SNPYVWCVLFILIGYGIVGFI, WKYFWQSIIALAAAFTMYSIG, IMPQLGLLYVLLAYFVIVGTS, GLAIMPTVFVAAGFALVAWAT, AGELVIVCTAIVGAGLGFLWF, VFMGDVGSLALGGALGTIAVL, FLLVIMGGVFVVETLSVILQV, and VIVRFWIISLMLVLIGLATLK.

It belongs to the glycosyltransferase 4 family. MraY subfamily. Mg(2+) serves as cofactor.

Its subcellular location is the cell inner membrane. It catalyses the reaction UDP-N-acetyl-alpha-D-muramoyl-L-alanyl-gamma-D-glutamyl-meso-2,6-diaminopimeloyl-D-alanyl-D-alanine + di-trans,octa-cis-undecaprenyl phosphate = di-trans,octa-cis-undecaprenyl diphospho-N-acetyl-alpha-D-muramoyl-L-alanyl-D-glutamyl-meso-2,6-diaminopimeloyl-D-alanyl-D-alanine + UMP. It participates in cell wall biogenesis; peptidoglycan biosynthesis. Catalyzes the initial step of the lipid cycle reactions in the biosynthesis of the cell wall peptidoglycan: transfers peptidoglycan precursor phospho-MurNAc-pentapeptide from UDP-MurNAc-pentapeptide onto the lipid carrier undecaprenyl phosphate, yielding undecaprenyl-pyrophosphoryl-MurNAc-pentapeptide, known as lipid I. This is Phospho-N-acetylmuramoyl-pentapeptide-transferase from Yersinia pseudotuberculosis serotype O:1b (strain IP 31758).